Consider the following 290-residue polypeptide: MLKTIQDKAKHRTRPLWAWLKLLWQRIDEDNMTTLAGNLAYVSLLSLVPLVAVVFALFAAFPMFSDVSIQLRHFIFANFLPATGDVIQRYIEQFVANSNKMTAVGACGLIVTALLLMYSIDSALNTIWRSKRARPKIYSFAVYWMILTLGPLLAGASLAISSYLLSLRWASDLNTVIDNVLRIFPLLLSWISFWLLYSIVPTIRVPNRDAIVGAFVAALLFEAGKKGFALYITMFPSYQLIYGVLAVIPILFVWVYWTWCIVLLGAEITVTLGEYRKLKQAAEQEEDDEP.

The next 6 helical transmembrane spans lie at 44 to 64, 104 to 124, 140 to 160, 183 to 203, 210 to 230, and 244 to 264; these read LLSLVPLVAVVFALFAAFPMF, VGACGLIVTALLLMYSIDSAL, FAVYWMILTLGPLLAGASLAI, IFPLLLSWISFWLLYSIVPTI, AIVGAFVAALLFEAGKKGFAL, and VLAVIPILFVWVYWTWCIVLL.

Belongs to the UPF0761 family.

The protein resides in the cell inner membrane. In Escherichia coli O127:H6 (strain E2348/69 / EPEC), this protein is UPF0761 membrane protein YihY.